Reading from the N-terminus, the 124-residue chain is Fluoride-specific ion channel FluC (124 aa).

4 helical membrane passes run 4 to 24 (LLFV…MSII), 35 to 55 (FGTL…YALG), 62 to 82 (PELK…FSTF), and 95 to 115 (WFKS…MVYL). Positions 74 and 77 each coordinate Na(+).

Belongs to the fluoride channel Fluc/FEX (TC 1.A.43) family.

Its subcellular location is the cell inner membrane. The enzyme catalyses fluoride(in) = fluoride(out). Its activity is regulated as follows. Na(+) is not transported, but it plays an essential structural role and its presence is essential for fluoride channel function. Functionally, fluoride-specific ion channel. Important for reducing fluoride concentration in the cell, thus reducing its toxicity. This chain is Fluoride-specific ion channel FluC, found in Shewanella denitrificans (strain OS217 / ATCC BAA-1090 / DSM 15013).